The following is a 1368-amino-acid chain: DNA-directed RNA polymerase subunit beta (1368 aa).

The protein belongs to the RNA polymerase beta chain family. In terms of assembly, the RNAP catalytic core consists of 2 alpha, 1 beta, 1 beta' and 1 omega subunit. When a sigma factor is associated with the core the holoenzyme is formed, which can initiate transcription.

It catalyses the reaction RNA(n) + a ribonucleoside 5'-triphosphate = RNA(n+1) + diphosphate. DNA-dependent RNA polymerase catalyzes the transcription of DNA into RNA using the four ribonucleoside triphosphates as substrates. The sequence is that of DNA-directed RNA polymerase subunit beta from Burkholderia thailandensis (strain ATCC 700388 / DSM 13276 / CCUG 48851 / CIP 106301 / E264).